The chain runs to 700 residues: Elongation factor G 1 (700 aa).

In terms of domain architecture, tr-type G spans 8–290 (ERYRNIGISA…AVIDYLPSPA (283 aa)). Residues 17-24 (AHIDAGKT), 88-92 (DTPGH), and 142-145 (NKMD) contribute to the GTP site.

It belongs to the TRAFAC class translation factor GTPase superfamily. Classic translation factor GTPase family. EF-G/EF-2 subfamily.

It is found in the cytoplasm. Functionally, catalyzes the GTP-dependent ribosomal translocation step during translation elongation. During this step, the ribosome changes from the pre-translocational (PRE) to the post-translocational (POST) state as the newly formed A-site-bound peptidyl-tRNA and P-site-bound deacylated tRNA move to the P and E sites, respectively. Catalyzes the coordinated movement of the two tRNA molecules, the mRNA and conformational changes in the ribosome. This is Elongation factor G 1 from Bordetella bronchiseptica (strain ATCC BAA-588 / NCTC 13252 / RB50) (Alcaligenes bronchisepticus).